Consider the following 138-residue polypeptide: Putative pre-16S rRNA nuclease (138 aa).

Belongs to the YqgF nuclease family.

It is found in the cytoplasm. Could be a nuclease involved in processing of the 5'-end of pre-16S rRNA. The polypeptide is Putative pre-16S rRNA nuclease (Helicobacter hepaticus (strain ATCC 51449 / 3B1)).